Here is a 343-residue protein sequence, read N- to C-terminus: MAKRRLSKRQVDRIRERQSQRLDTSVAAPDGKQLGSEQAGLVIAHHGKQVQVETLDNSDDSPRRLRCHLRATLGSVVTGDRIVFQEDDSSGIIVAIQPRSSTLVRPDSYGKLKPVAANVDQLLITIACAPEPFSGLIDRYLAVAENLHIRPVLLFNKLDLLQSDEIDSAIANKVAKLRTLYTSLGYRCIDTCAKNGDGLDELRNTLQDNTSVFVGQSGVGKSSIIKKLLPDQEIAIGALSDAIDKGRHTTTHSELFHFPFGGDCIDSPGIREFGLWHLSPKEVTYGFIEIRDIAGLCKFRDCSHTHEPSCAVLNAVEDGSLHPERYENFQRIVQSLDDVNMQG.

The disordered stretch occupies residues 1 to 32 (MAKRRLSKRQVDRIRERQSQRLDTSVAAPDGK). The segment covering 9–20 (RQVDRIRERQSQ) has biased composition (basic and acidic residues). The 165-residue stretch at 109 to 273 (YGKLKPVAAN…CIDSPGIREF (165 aa)) folds into the CP-type G domain. GTP is bound by residues 156-159 (NKLD) and 215-223 (GQSGVGKSS). Zn(2+) is bound by residues C297, C302, H304, and C310.

This sequence belongs to the TRAFAC class YlqF/YawG GTPase family. RsgA subfamily. As to quaternary structure, monomer. Associates with 30S ribosomal subunit, binds 16S rRNA. The cofactor is Zn(2+).

The protein resides in the cytoplasm. Functionally, one of several proteins that assist in the late maturation steps of the functional core of the 30S ribosomal subunit. Helps release RbfA from mature subunits. May play a role in the assembly of ribosomal proteins into the subunit. Circularly permuted GTPase that catalyzes slow GTP hydrolysis, GTPase activity is stimulated by the 30S ribosomal subunit. The protein is Small ribosomal subunit biogenesis GTPase RsgA of Saccharophagus degradans (strain 2-40 / ATCC 43961 / DSM 17024).